Reading from the N-terminus, the 445-residue chain is Ribosomal protein uS12 methylthiotransferase RimO (445 aa).

Positions 4 to 119 (YKVGMVSLGC…INEAIMNFIN (116 aa)) constitute an MTTase N-terminal domain. 6 residues coordinate [4Fe-4S] cluster: Cys-13, Cys-48, Cys-82, Cys-157, Cys-161, and Cys-164. One can recognise a Radical SAM core domain in the interval 143 to 373 (TTDKATAYLR…MLLQKELSEE (231 aa)). The TRAM domain occupies 376-441 (KNKLGREYDV…EYDLVGVVCN (66 aa)).

This sequence belongs to the methylthiotransferase family. RimO subfamily. It depends on [4Fe-4S] cluster as a cofactor.

Its subcellular location is the cytoplasm. It carries out the reaction L-aspartate(89)-[ribosomal protein uS12]-hydrogen + (sulfur carrier)-SH + AH2 + 2 S-adenosyl-L-methionine = 3-methylsulfanyl-L-aspartate(89)-[ribosomal protein uS12]-hydrogen + (sulfur carrier)-H + 5'-deoxyadenosine + L-methionine + A + S-adenosyl-L-homocysteine + 2 H(+). In terms of biological role, catalyzes the methylthiolation of an aspartic acid residue of ribosomal protein uS12. The chain is Ribosomal protein uS12 methylthiotransferase RimO from Clostridium perfringens (strain SM101 / Type A).